Reading from the N-terminus, the 191-residue chain is Small ribosomal subunit protein uS5 (191 aa).

Positions 1-20 are disordered; that stretch reads MAAERERGGRERSRDREERD. The region spanning 23-86 is the S5 DRBM domain; sequence FVDKLVHINR…EAAKRNLTRV (64 aa).

Belongs to the universal ribosomal protein uS5 family. Part of the 30S ribosomal subunit. Contacts proteins S4 and S8.

Functionally, with S4 and S12 plays an important role in translational accuracy. Its function is as follows. Located at the back of the 30S subunit body where it stabilizes the conformation of the head with respect to the body. In Rhodopseudomonas palustris (strain HaA2), this protein is Small ribosomal subunit protein uS5.